The primary structure comprises 886 residues: Microsomal triglyceride transfer protein (886 aa).

An N-terminal signal peptide occupies residues 1–24 (MLRLAGLLLCVTSFLSTSSLGANA). Positions 28 to 662 (LDNDRLYRYS…QSNNALLHGL (635 aa)) constitute a Vitellogenin domain. 2 disulfides stabilise this stretch: C174-C194 and C440-C445.

In terms of assembly, heterodimer; heterodimerizes with the protein disulfide isomerase. Interacts with apolipoprotein B.

It is found in the endoplasmic reticulum. Catalyzes the transport of triglyceride, cholesteryl ester, and phospholipid between phospholipid surfaces. Required for the secretion of plasma lipoproteins that contain apolipoprotein B. The sequence is that of Microsomal triglyceride transfer protein from Megalobrama amblycephala (Chinese blunt snout bream).